Reading from the N-terminus, the 338-residue chain is Glycerol-3-phosphate dehydrogenase [NAD(P)+] (338 aa).

The NADPH site is built by serine 14, tyrosine 15, histidine 35, and lysine 109. Positions 109, 138, and 140 each coordinate sn-glycerol 3-phosphate. NADPH is bound at residue alanine 142. The sn-glycerol 3-phosphate site is built by lysine 194, aspartate 247, serine 257, arginine 258, and asparagine 259. Lysine 194 acts as the Proton acceptor in catalysis. Residue arginine 258 coordinates NADPH. NADPH-binding residues include valine 282 and glutamate 284.

This sequence belongs to the NAD-dependent glycerol-3-phosphate dehydrogenase family.

The protein localises to the cytoplasm. The enzyme catalyses sn-glycerol 3-phosphate + NAD(+) = dihydroxyacetone phosphate + NADH + H(+). It catalyses the reaction sn-glycerol 3-phosphate + NADP(+) = dihydroxyacetone phosphate + NADPH + H(+). It participates in membrane lipid metabolism; glycerophospholipid metabolism. In terms of biological role, catalyzes the reduction of the glycolytic intermediate dihydroxyacetone phosphate (DHAP) to sn-glycerol 3-phosphate (G3P), the key precursor for phospholipid synthesis. In Shewanella baltica (strain OS155 / ATCC BAA-1091), this protein is Glycerol-3-phosphate dehydrogenase [NAD(P)+].